A 353-amino-acid polypeptide reads, in one-letter code: Phosphate acyltransferase (353 aa).

It belongs to the PlsX family. As to quaternary structure, homodimer. Probably interacts with PlsY.

It is found in the cytoplasm. The enzyme catalyses a fatty acyl-[ACP] + phosphate = an acyl phosphate + holo-[ACP]. The protein operates within lipid metabolism; phospholipid metabolism. In terms of biological role, catalyzes the reversible formation of acyl-phosphate (acyl-PO(4)) from acyl-[acyl-carrier-protein] (acyl-ACP). This enzyme utilizes acyl-ACP as fatty acyl donor, but not acyl-CoA. The chain is Phosphate acyltransferase from Rhodopseudomonas palustris (strain HaA2).